Consider the following 449-residue polypeptide: Phosphoglucosamine mutase (449 aa).

Catalysis depends on serine 101, which acts as the Phosphoserine intermediate. Mg(2+) is bound by residues serine 101, aspartate 240, aspartate 242, and aspartate 244. Serine 101 is modified (phosphoserine).

Belongs to the phosphohexose mutase family. Mg(2+) serves as cofactor. In terms of processing, activated by phosphorylation.

The catalysed reaction is alpha-D-glucosamine 1-phosphate = D-glucosamine 6-phosphate. Functionally, catalyzes the conversion of glucosamine-6-phosphate to glucosamine-1-phosphate. In Streptococcus mutans serotype c (strain ATCC 700610 / UA159), this protein is Phosphoglucosamine mutase.